The following is a 415-amino-acid chain: Phosphoglycerate kinase (415 aa).

Positions 23, 24, 25, 26, 39, 40, 63, 64, 66, 67, 122, 123, and 170 each coordinate (2R)-3-phosphoglycerate. Glycine 213 is an ADP binding site. Glycine 213 is a binding site for CDP. AMP is bound by residues alanine 214 and lysine 215. Alanine 214 contacts ATP. Residue alanine 214 coordinates Mg(2+). A CDP-binding site is contributed by aspartate 218. Position 218 (aspartate 218) interacts with Mg(2+). Lysine 219 provides a ligand contact to AMP. Residue lysine 219 participates in ATP binding. Glycine 237 contributes to the ADP binding site. Glycine 237 serves as a coordination point for CDP. Positions 238 and 311 each coordinate AMP. Residues glycine 238 and glycine 311 each contribute to the ATP site. Residues glycine 336 and phenylalanine 341 each coordinate CDP. Phenylalanine 341 provides a ligand contact to ADP. Glutamate 342 contributes to the AMP binding site. Positions 342, 373, and 374 each coordinate ATP. Aspartate 373 is a binding site for Mg(2+).

It belongs to the phosphoglycerate kinase family. In terms of assembly, monomer. Requires Mg(2+) as cofactor.

The protein resides in the cytoplasm. It is found in the mitochondrion. It catalyses the reaction (2R)-3-phosphoglycerate + ATP = (2R)-3-phospho-glyceroyl phosphate + ADP. It participates in carbohydrate degradation; glycolysis; pyruvate from D-glyceraldehyde 3-phosphate: step 2/5. Its function is as follows. Catalyzes one of the two ATP producing reactions in the glycolytic pathway via the reversible conversion of 1,3-diphosphoglycerate to 3-phosphoglycerate. Both L- and D- forms of purine and pyrimidine nucleotides can be used as substrates, but the activity is much lower on pyrimidines. Negatively regulates the biosynthesis of acetyl-CoA from pyruvate in the mitochondrion. The polypeptide is Phosphoglycerate kinase (PGKA) (Penicillium chrysogenum (Penicillium notatum)).